We begin with the raw amino-acid sequence, 658 residues long: Sulfate transporter 3.1 (658 aa).

At 1–85 the chain is on the cytoplasmic side; sequence MGTEDYTFPQ…RYNLKFFKSD (85 aa). Residues 86–106 form a helical membrane-spanning segment; the sequence is LIAGITIASLAIPQGISYAKL. At 107-108 the chain is on the extracellular side; it reads AN. The helical transmembrane segment at 109–129 threads the bilayer; sequence LPPILGLYSSFVPPLVYAVLG. Topologically, residues 130–133 are cytoplasmic; the sequence is SSRD. A helical membrane pass occupies residues 134-154; that stretch reads LAVGTVAVASLLTGAMLSKEV. At 155 to 163 the chain is on the extracellular side; that stretch reads DAEKDPKLY. A helical transmembrane segment spans residues 164–184; that stretch reads LHLAFTATFFAGVLEASLGIF. Position 185 (arginine 185) is a topological domain, cytoplasmic. The helical transmembrane segment at 186 to 206 threads the bilayer; sequence LGFIVDFLSHATIVGFMGGAA. At 207 to 245 the chain is on the extracellular side; that stretch reads TVVSLQQLKGIFGLKHFTDSTDVISVMRSVFSQTHEWRW. A helical membrane pass occupies residues 246–266; it reads ESGVLGCGFLFFLLSTRYFSI. At 267 to 271 the chain is on the cytoplasmic side; it reads KKPKF. Residues 272–292 form a helical membrane-spanning segment; sequence FWVAAMAPLTSVILGSLLVYF. The Extracellular segment spans residues 293 to 332; that stretch reads THAERHGVQVIGDLKKGLNPLSGSDLIFTSPYMSTAVKTG. A helical membrane pass occupies residues 333–353; that stretch reads LITGIIALAEGVAVGRSFAMF. The Cytoplasmic segment spans residues 354–363; it reads KNYNIDGNKE. A helical membrane pass occupies residues 364-384; it reads MIAFGMMNIVGSFTSCYLTTG. Residues 385-398 lie on the Extracellular side of the membrane; the sequence is PFSRSAVNYNAGCK. Residues 399–419 traverse the membrane as a helical segment; it reads TAMSNIVMAIAVMFTLLFLTP. Residues 420 to 425 are Cytoplasmic-facing; the sequence is LFHYTP. Residues 426 to 446 form a helical membrane-spanning segment; that stretch reads LVVLSAIIISAMLGLIDYQAA. Topologically, residues 447–464 are extracellular; it reads IHLWKVDKFDFLVCMSAY. Residues 465 to 485 traverse the membrane as a helical segment; sequence VGVVFGSVEIGLVVAVAISIA. Over 486–658 the chain is Cytoplasmic; that stretch reads RLLLFVSRPK…ASKNEPWNNV (173 aa). The region spanning 513–637 is the STAS domain; sequence QYPSSRTVPG…LTVGEAVEAC (125 aa).

Belongs to the SLC26A/SulP transporter (TC 2.A.53) family. As to expression, expressed only in leaves.

The protein resides in the membrane. In terms of biological role, h(+)/sulfate cotransporter that may play a role in the regulation of sulfate assimilation. This chain is Sulfate transporter 3.1 (SULTR3;1), found in Arabidopsis thaliana (Mouse-ear cress).